The chain runs to 416 residues: PAQEAHQVAVAAFREAQVQYLNNQPWQTIKNTLTHNGYRYTNTQCPAADMKIGAQDIFPNAYQGKGVCSSDTTNTQHATNLWMSTLSVNENGKDKTLFCGIRHGVLSPYHVKDPILRQVGAENRAREVLTAALFSQPALLTKALQDEVVSLRLVSVGLLTTSTIVGNEDAMVQDQMRAWQSLTQPGNVIHLNIRNKEGELRTVKIKPEIAAFNTGVNELTLKLGLGHQASDNYNIGALHQLLGHDLRPEAPPGGWVGEWLAQHPDNHAVVNTLVRQIKDIWNSKLHHTDGNEPYKFAQRLAILAHEIGAVPAWNCKSGKDRTGMQDAEIKREVISLHQKATLTPLASLPDSDGQEIFQKVLLNSGNLEIQKQNTGGAGNKVLKNLPPEVLNLSYQRRIGDANIWQLVKGLSSLVTS.

The active site involves Cys315. The short motif at 315–321 (CKSGKDR) is the CX5R motif element.

Belongs to the phosphatase IpgD/SopB family.

The protein resides in the secreted. Its function is as follows. Converts phosphatidylinositol 3,4,5-trisphosphate (PtdIns 3,4,5-P3) to PtdIns 3-P and prevents the transition of PtdIns 3-P to PtdIns 3,5-P2. It is one of the known effectors injected by Salmonella into the host cell and is required for invasion and for an efficient generation and maintenance of Salmonella-containing vacuole (SVC). Alteration of the phosphoinositide composition of the plasma membrane causes membrane ruffling and actin cytoskeleton rearrangements. The persistence of PtdIns 3-P diverts the SCV from the endocytic pathway resulting in enlarged vesicles, which are essential to create a favorable environment where Salmonella can replicate and avoid immune defenses of the host cell. The protein is Inositol phosphate phosphatase SopB (sopB) of Salmonella bongori.